The following is a 297-amino-acid chain: tRNA pseudouridine synthase B (297 aa).

D44 acts as the Nucleophile in catalysis.

The protein belongs to the pseudouridine synthase TruB family. Type 1 subfamily.

It catalyses the reaction uridine(55) in tRNA = pseudouridine(55) in tRNA. Functionally, responsible for synthesis of pseudouridine from uracil-55 in the psi GC loop of transfer RNAs. This Corynebacterium efficiens (strain DSM 44549 / YS-314 / AJ 12310 / JCM 11189 / NBRC 100395) protein is tRNA pseudouridine synthase B.